Here is a 313-residue protein sequence, read N- to C-terminus: Protein OPG185 (313 aa).

The N-terminal stretch at 1–16 (MTRLSILLLLISLVYS) is a signal peptide. The Virion surface portion of the chain corresponds to 17–277 (TPYPQTQISK…GKYSTKDYVK (261 aa)). One can recognise an Ig-like V-type domain in the interval 18–121 (PYPQTQISKK…TTNDTDKVDY (104 aa)). A disulfide bridge links Cys-36 with Cys-105. 5 N-linked (GlcNAc...) asparagine; by host glycosylation sites follow: Asn-71, Asn-114, Asn-163, Asn-182, and Asn-262. The helical transmembrane segment at 278–301 (VFGIAALIILSAVAIFCITYYICN) threads the bilayer. Over 302–313 (KRSRKYKTENKV) the chain is Intravirion.

The protein belongs to the orthopoxvirus OPG185 family. As to quaternary structure, heterodimerizes with OPG040. The heterodimer OPG185-OPG040 interacts with components of the entry fusion complex OPG143 and OPG094. Heterodimer with C3/VPC protein; disulfide-linked. Glycosylated; contains phosphate and sulfate-substituted glycans. O-glycosylation is required for hemagglutination and hemadsorption activities of infected cell membranes.

Its subcellular location is the virion membrane. It is found in the host membrane. Prevents cell to cell fusion by interacting with and directing the viral OPG040 protein on the host plasma membrane. The OPG185-OPG040 complex associates with components of the entry fusion complex (EFC) presumably to avoid superinfection and syncytium formation. Via its interaction with C3/VCP protein, protects the infected cell and probably also the extracellular enveloped virus from complement attack. The sequence is that of Protein OPG185 (OPG185) from Homo sapiens (Human).